A 286-amino-acid chain; its full sequence is NADH-cytochrome b5 reductase 1 (286 aa).

A helical transmembrane segment spans residues 6–26; the sequence is FILVIIGSVALAAGVKYVFTL. Residues 52–155 enclose the FAD-binding FR-type domain; that stretch reads QEYRKFQLKE…KGPKGKFNYQ (104 aa). FAD is bound by residues 135–150 and 161–193; these read DNMF…GPKG and SIGM…EISL.

It belongs to the flavoprotein pyridine nucleotide cytochrome reductase family. As to quaternary structure, monomer. FAD serves as cofactor.

Its subcellular location is the endoplasmic reticulum membrane. It localises to the mitochondrion outer membrane. The enzyme catalyses 2 Fe(III)-[cytochrome b5] + NADH = 2 Fe(II)-[cytochrome b5] + NAD(+) + H(+). Electron donor reductase for cytochrome b5. The cytochrome b5/NADH cytochrome b5 reductase electron transfer system supports the catalytic activity of several sterol biosynthetic enzymes. This chain is NADH-cytochrome b5 reductase 1 (cyb5r1), found in Dictyostelium discoideum (Social amoeba).